The following is a 423-amino-acid chain: Serine--tRNA ligase (423 aa).

231-233 (TAE) serves as a coordination point for L-serine. 262–264 (RSE) serves as a coordination point for ATP. E285 is a binding site for L-serine. 349–352 (EISS) provides a ligand contact to ATP. S384 serves as a coordination point for L-serine.

The protein belongs to the class-II aminoacyl-tRNA synthetase family. Type-1 seryl-tRNA synthetase subfamily. In terms of assembly, homodimer. The tRNA molecule binds across the dimer.

The protein localises to the cytoplasm. It carries out the reaction tRNA(Ser) + L-serine + ATP = L-seryl-tRNA(Ser) + AMP + diphosphate + H(+). It catalyses the reaction tRNA(Sec) + L-serine + ATP = L-seryl-tRNA(Sec) + AMP + diphosphate + H(+). It functions in the pathway aminoacyl-tRNA biosynthesis; selenocysteinyl-tRNA(Sec) biosynthesis; L-seryl-tRNA(Sec) from L-serine and tRNA(Sec): step 1/1. Functionally, catalyzes the attachment of serine to tRNA(Ser). Is also able to aminoacylate tRNA(Sec) with serine, to form the misacylated tRNA L-seryl-tRNA(Sec), which will be further converted into selenocysteinyl-tRNA(Sec). The sequence is that of Serine--tRNA ligase from Lactococcus lactis subsp. cremoris (strain MG1363).